A 1007-amino-acid polypeptide reads, in one-letter code: Glutamate receptor ionotropic, delta-2 (1007 aa).

An N-terminal signal peptide occupies residues 1 to 23 (MEVFPLLFFLSFWWSRTWDLATS). An interaction with CBLN1 homotrimer region spans residues 24-345 (DSIIHIGAIF…NAFHKKLEDR (322 aa)). At 24-566 (DSIIHIGAIF…DMFACLAPFD (543 aa)) the chain is on the extracellular side. Intrachain disulfides connect Cys83–Cys355, Cys99–Cys131, and Cys298–Cys310. Residue Asn293 is glycosylated (N-linked (GlcNAc...) asparagine). N-linked (GlcNAc...) asparagine glycosylation occurs at Asn426. Residues 567–587 (LSLWACIAGTVLLVGLLVYLL) traverse the membrane as a helical segment. The Cytoplasmic segment spans residues 588–635 (NWLNPPRLQMGSMTSTTLYNSMWFVYGSFVQQGGEVPYTTLATRMMMG). A helical transmembrane segment spans residues 636–656 (AWWLFALIVISSYTANLAAFL). Over 657 to 830 (TITRIESSIQ…QKGGALDIKS (174 aa)) the chain is Extracellular. N-linked (GlcNAc...) asparagine glycans are attached at residues Asn713 and Asn716. A helical transmembrane segment spans residues 831-851 (LAGVFCILAAGIVLSCLIAVL). Over 852-1007 (ETWWSRRKGS…GNDPDRGTSI (156 aa)) the chain is Cytoplasmic. Ser883 carries the phosphoserine modification. Thr886 carries the post-translational modification Phosphothreonine. Ser890 carries the post-translational modification Phosphoserine. Residues 921–991 (DFRNTHITTT…MSSIPYQPTP (71 aa)) form an interaction with AP4M1 region. The short motif at 1005 to 1007 (TSI) is the PDZ-binding element. Ser1006 carries the post-translational modification Phosphoserine.

It belongs to the glutamate-gated ion channel (TC 1.A.10.1) family. GRID2 subfamily. Tetramer; dimer of dimers. Interacts with AP4M1. Interacts with EML2. Interacts with MAGI2 (via PDZ domains). Interacts with BECN1, GOPC, GRID2IP, SHANK1 and SHANK2. Interacts with CBLN2, but not with CBLN4. Interacts with CBLN1 (via C1q domain); the interaction is CBLN1-NRX1 complex formation-dependent; CBLN1-binding is calcium-independent; CBLN1 hexamers anchor GRID2 N-terminal domain dimers to monomeric NRXN1 isoform beta; promotes synaptogenesis and mediates the D-Serine-dependent long term depression signals and AMPA receptor endocytosis. In terms of tissue distribution, expressed at high levels in the cerebellar Purkinje cell layer, almost absent in the forebrain.

The protein resides in the postsynaptic cell membrane. It catalyses the reaction Ca(2+)(in) = Ca(2+)(out). It carries out the reaction Na(+)(in) = Na(+)(out). In terms of biological role, member of the ionotropic glutamate receptor family, which plays a crucial role in synaptic organization and signal transduction in the central nervous system. Although it shares structural features with ionotropic glutamate receptors, does not bind glutamate as a primary ligand. Promotes synaptogenesis and mediates the D-Serine-dependent long term depression signals and AMPA receptor endocytosis of cerebellar parallel fiber-Purkinje cell (PF-PC) synapses through the NRX1B-CBLN1-GRID2 triad complex. In the presence of neurexins and cerebellins, forms cation-selective channels that are proposed to be gated by glycine and D-serine. However, recent research disputes this ligand-gated cation channel activity. Cation-selective ion channel activity can be triggered by GRM1 in Purkinje cells. This chain is Glutamate receptor ionotropic, delta-2 (Grid2), found in Rattus norvegicus (Rat).